Here is a 510-residue protein sequence, read N- to C-terminus: Beta-glucosidase 34 (510 aa).

Positions 1–26 (MGNGGRCMVEVVILLVLMAMSQGCDA) are cleaved as a signal peptide. Asn-28 carries an N-linked (GlcNAc...) asparagine glycan. Gln-52 is an a beta-D-glucoside binding site. A glycan (N-linked (GlcNAc...) asparagine) is linked at Asn-120. A beta-D-glucoside is bound by residues His-153 and 198-199 (NE). Glu-199 acts as the Proton donor in catalysis. A disulfide bridge links Cys-218 with Cys-226. Asn-279 and Asn-331 each carry an N-linked (GlcNAc...) asparagine glycan. Tyr-342 contacts a beta-D-glucoside. Residue Asn-360 is glycosylated (N-linked (GlcNAc...) asparagine). A beta-D-glucoside contacts are provided by residues Glu-415, Trp-465, 472 to 473 (EW), and Phe-481. Residue Glu-415 is the Nucleophile of the active site.

It belongs to the glycosyl hydrolase 1 family.

The enzyme catalyses Hydrolysis of terminal, non-reducing beta-D-glucosyl residues with release of beta-D-glucose.. The chain is Beta-glucosidase 34 (BGLU34) from Oryza sativa subsp. japonica (Rice).